A 309-amino-acid chain; its full sequence is HPr kinase/phosphorylase (309 aa).

Residues histidine 138 and lysine 159 contribute to the active site. ATP is bound at residue 153 to 160 (GDSGIGKS). Residue serine 160 participates in Mg(2+) binding. Aspartate 177 (proton acceptor; for phosphorylation activity. Proton donor; for dephosphorylation activity) is an active-site residue. An important for the catalytic mechanism of both phosphorylation and dephosphorylation region spans residues 201–210 (LEIRGVGIID). Glutamate 202 serves as a coordination point for Mg(2+). Residue arginine 243 is part of the active site. The important for the catalytic mechanism of dephosphorylation stretch occupies residues 264-269 (PVKTGR).

This sequence belongs to the HPrK/P family. In terms of assembly, homohexamer. It depends on Mg(2+) as a cofactor.

The enzyme catalyses [HPr protein]-L-serine + ATP = [HPr protein]-O-phospho-L-serine + ADP + H(+). It catalyses the reaction [HPr protein]-O-phospho-L-serine + phosphate + H(+) = [HPr protein]-L-serine + diphosphate. In terms of biological role, catalyzes the ATP- as well as the pyrophosphate-dependent phosphorylation of a specific serine residue in HPr, a phosphocarrier protein of the phosphoenolpyruvate-dependent sugar phosphotransferase system (PTS). HprK/P also catalyzes the pyrophosphate-producing, inorganic phosphate-dependent dephosphorylation (phosphorolysis) of seryl-phosphorylated HPr (P-Ser-HPr). The two antagonistic activities of HprK/P are regulated by several intracellular metabolites, which change their concentration in response to the absence or presence of rapidly metabolisable carbon sources (glucose, fructose, etc.) in the growth medium. Therefore, by controlling the phosphorylation state of HPr, HPrK/P is a sensor enzyme that plays a major role in the regulation of carbon metabolism and sugar transport: it mediates carbon catabolite repression (CCR), and regulates PTS-catalyzed carbohydrate uptake and inducer exclusion. The chain is HPr kinase/phosphorylase from Streptococcus thermophilus (strain ATCC BAA-250 / LMG 18311).